The primary structure comprises 326 residues: F-box/LRR-repeat protein 12 (326 aa).

The region spanning 1–47 is the F-box domain; sequence MATLFDLPDLVLLEIFSYLPVRDRIRISRVCHRWKRLVDDRWLWRHV. LRR repeat units follow at residues 51–78, 86–111, 113–133, 161–185, 186–211, 212–236, 237–261, and 266–291; these read LYTMRPKVMWHLLRRYMASRLYSLRMGG, APQLSPALMRALGQKCPNLKRLCLHV, DLSMVPITSLPSTLRTLELHS, VPAFRDEHLQGLTRFRALRSLVLGG, TYRVTETGLDASLQELSYLQRLEVLG, CTLSADSTLLAISRHLRDVRKIRLT, VGGLSAQGLVFLEGMPVLESLCFQG, and PDMPTPTQIVSSCLTMPKLRVLEVQG.

Interacts with SKP1 and CUL1.

The protein operates within protein modification; protein ubiquitination. In terms of biological role, substrate-recognition component of the SCF (SKP1-CUL1-F-box protein)-type E3 ubiquitin ligase complex. Mediates the polyubiquitination and proteasomal degradation of CAMK1 leading to disruption of cyclin D1/CDK4 complex assembly which results in G1 cell cycle arrest in lung epithelia. This chain is F-box/LRR-repeat protein 12 (Fbxl12), found in Mus musculus (Mouse).